The following is a 74-amino-acid chain: Brevinin-2CG1 (74 aa).

Positions 1-22 (MFTMKKSMLVLFFLGTISLSLC) are cleaved as a signal peptide. The propeptide at 23-39 (EEERNADEDDGEMTEEV) is removed in mature form. Cys68 and Cys74 are disulfide-bonded.

In terms of tissue distribution, expressed by the skin glands.

It is found in the secreted. Functionally, antimicrobial peptide active against a variety of Gram-positive and some Gram-negative bacterial strains. Has antifungal activity against a slime mold isolate. Has hemolytic activity against human erythrocytes. The sequence is that of Brevinin-2CG1 from Amolops chunganensis (Chungan torrent frog).